The chain runs to 400 residues: Elongation factor Tu (400 aa).

The tr-type G domain maps to 10-208 (KPHVNVGTIG…AMDNYIPDPQ (199 aa)). The tract at residues 19-26 (GHIDHGKS) is G1. 19 to 26 (GHIDHGKS) serves as a coordination point for GTP. Residue serine 26 participates in Mg(2+) binding. Residues 60-64 (GITIN) form a G2 region. A G3 region spans residues 81–84 (DCPG). Residues 81–85 (DCPGH) and 136–139 (NKTD) each bind GTP. Residues 136 to 139 (NKTD) are G4. Residues 174 to 176 (SAL) are G5.

It belongs to the TRAFAC class translation factor GTPase superfamily. Classic translation factor GTPase family. EF-Tu/EF-1A subfamily. In terms of assembly, monomer.

Its subcellular location is the cytoplasm. It catalyses the reaction GTP + H2O = GDP + phosphate + H(+). Functionally, GTP hydrolase that promotes the GTP-dependent binding of aminoacyl-tRNA to the A-site of ribosomes during protein biosynthesis. The polypeptide is Elongation factor Tu (Thermotoga neapolitana (strain ATCC 49049 / DSM 4359 / NBRC 107923 / NS-E)).